We begin with the raw amino-acid sequence, 952 residues long: Bifunctional ent-kaurene synthase (952 aa).

The DXDD B-type cyclization motif signature appears at 328–331; it reads DVDD. Positions 668, 672, 848, 849, 852, and 856 each coordinate Mg(2+). The DEXXE A-type cyclization motif motif lies at 668–672; sequence DEYME.

This sequence belongs to the terpene synthase family. Mg(2+) serves as cofactor.

It carries out the reaction ent-copalyl diphosphate = ent-kaur-16-ene + diphosphate. It catalyses the reaction (2E,6E,10E)-geranylgeranyl diphosphate = ent-copalyl diphosphate. Its pathway is plant hormone biosynthesis; gibberellin biosynthesis. Its function is as follows. Bifunctional ent-kaurene synthase; part of the gene cluster that mediates the biosynthesis of gibberellins (GAs), diterpenoids that may provide a selective advantage during infection of the preferred host plant, rice. Gibberellins (GAs) are diterpenoids and are synthesized via the mevalonate pathway. Biosynthesis of the major metabolite GA3 (gibberellic acid) from geranylgeranyl diphosphate (GGPP) requires 13 steps. The GGPP produced by the geranylgeranyl diphosphate synthase GGS2 is converted to ent-kaurene via ent-copalyldiphosphate in a two-step cyclization reaction performed by the bifunctional ent-copalyl diphosphate synthase/ent-kaurene synthase enzyme (CPS/KS). Ent-Kaurene is metabolized to GAs by a series of oxidation reactions catalyzed by cytochrome P450 monooxygenases. Cytochrome P450 monooxygenase P450-4 is an ent-kaurene oxidase that catalyzes the three oxidation steps between ent-kaurene and ent-kaurenoic acid. The highly multifunctional cytochrome P450 monooxygenase P450-1 then catalyzes four steps involving oxidation at two carbon atoms, in the main pathway from ent-kaurenoic acid to GA14 via GA12-aldehyde as well as producing kaurenolides and fujenoic acids as by-products. The cytochrome P450 monooxygenase P450-2 then converts GA14 to GA4 by removal of C-20. GA4 is further converted to GA7 by the GA4 desaturase DES via 1,2-desaturation before cytochrome P450 monooxygenase P450-3, a 13-hydroxylase, hydroxylates GA7 to GA3, the final product of the GA-biosynthetic pathway. In Gibberella fujikuroi (strain CBS 195.34 / IMI 58289 / NRRL A-6831) (Bakanae and foot rot disease fungus), this protein is Bifunctional ent-kaurene synthase.